A 557-amino-acid polypeptide reads, in one-letter code: Putative glutathione-regulated potassium-efflux system protein KefB (557 aa).

A run of 10 helical transmembrane segments spans residues 2 to 22 (LGYLLAGIAIGPWGLGFISDV), 24 to 44 (EILHFSELGVVFLMFIIGLEL), 56 to 76 (IFGVGAAQVLLSAALLAGLLM), 84 to 104 (AAVVGGIGFAMSSTAMALQLM), 121 to 141 (VLLFQDLAVIPALALVPLLAG), 146 to 166 (HFDWMKIGMKVLEFVGMLIGG), 176 to 196 (FIAASGVREVFTAATLLLVLG), 199 to 219 (LFMDALGLSMALGTFIAGVLL), 237 to 257 (GLLLGLFFISVGMSLNLGVLY), and 260 to 280 (LLWVVISVVVLVAVKILVLYL). The 120-residue stretch at 356–475 (KPQVIVVGFG…AGVTQFSRET (120 aa)) folds into the RCK N-terminal domain.

It belongs to the monovalent cation:proton antiporter 2 (CPA2) transporter (TC 2.A.37) family. KefB subfamily. In terms of assembly, interacts with the regulatory subunit KefG.

It localises to the cell inner membrane. Its function is as follows. Pore-forming subunit of a potassium efflux system that confers protection against electrophiles. Catalyzes K(+)/H(+) antiport. The chain is Putative glutathione-regulated potassium-efflux system protein KefB from Shigella flexneri.